The chain runs to 225 residues: Probable 3-keto-L-gulonate-6-phosphate decarboxylase (225 aa).

A substrate-binding site is contributed by D11. 2 residues coordinate Mg(2+): E33 and D62. R202 serves as a coordination point for substrate.

It belongs to the HPS/KGPDC family. KGPDC subfamily. Homodimer. The cofactor is Mg(2+).

It carries out the reaction 3-dehydro-L-gulonate 6-phosphate + H(+) = L-xylulose 5-phosphate + CO2. In terms of biological role, catalyzes the decarboxylation of 3-keto-L-gulonate-6-P into L-xylulose-5-P. In Haemophilus influenzae (strain ATCC 51907 / DSM 11121 / KW20 / Rd), this protein is Probable 3-keto-L-gulonate-6-phosphate decarboxylase (sgbH).